Consider the following 964-residue polypeptide: Chaperone protein ClpB4, mitochondrial (964 aa).

The transit peptide at methionine 1 to threonine 39 directs the protein to the mitochondrion. A Clp R domain is found at valine 83–aspartate 227. 2 repeat regions span residues phenylalanine 88 to glutamine 153 and leucine 164 to aspartate 227. The segment at leucine 242–proline 490 is i. ATP contacts are provided by residues glycine 287–threonine 294 and glycine 690–threonine 697. The interval valine 616–serine 807 is II.

Belongs to the ClpA/ClpB family.

It localises to the mitochondrion. In terms of biological role, molecular chaperone that does not seem to be involved in heat stress response or tolerance. This chain is Chaperone protein ClpB4, mitochondrial (CLPB4), found in Arabidopsis thaliana (Mouse-ear cress).